We begin with the raw amino-acid sequence, 101 residues long: NADH-quinone oxidoreductase subunit K (101 aa).

3 helical membrane passes run 4–24, 30–50, and 61–81; these read LAHFLVLGAILFAISIVGIFL, IVLLMALELLLLAVNMNFVAF, and VFVFFILTVAAAESAIGLAIL.

It belongs to the complex I subunit 4L family. As to quaternary structure, NDH-1 is composed of 14 different subunits. Subunits NuoA, H, J, K, L, M, N constitute the membrane sector of the complex.

It localises to the cell inner membrane. The catalysed reaction is a quinone + NADH + 5 H(+)(in) = a quinol + NAD(+) + 4 H(+)(out). In terms of biological role, NDH-1 shuttles electrons from NADH, via FMN and iron-sulfur (Fe-S) centers, to quinones in the respiratory chain. The immediate electron acceptor for the enzyme in this species is believed to be ubiquinone. Couples the redox reaction to proton translocation (for every two electrons transferred, four hydrogen ions are translocated across the cytoplasmic membrane), and thus conserves the redox energy in a proton gradient. This chain is NADH-quinone oxidoreductase subunit K, found in Cupriavidus metallidurans (strain ATCC 43123 / DSM 2839 / NBRC 102507 / CH34) (Ralstonia metallidurans).